A 653-amino-acid chain; its full sequence is Pentatricopeptide repeat-containing protein At3g14730 (653 aa).

14 PPR repeats span residues 59-93 (NVAT…GFLD), 95-119 (SPRA…VLVF), 125-159 (DVFG…GILP), 160-193 (DKYT…GFDS), 194-224 (DCYV…LPDR), 226-260 (DSVL…GVGV), 261-295 (SRHT…GSGS), 296-326 (DIVV…MDER), 327-361 (DLFT…GIRP), 362-396 (DIVT…GLLN), 401-431 (NEFI…MRVK), 432-466 (DSAS…GVKP), 467-497 (DEIT…METV), and 503-537 (TSDH…DNPV). The tract at residues 538 to 613 (VWRSILSSCR…TPGCSWIVLK (76 aa)) is type E motif. The interval 614 to 644 (NGVHTFFTGNQTHPEFKSIHDWLSLVISHMH) is type E(+) motif.

It belongs to the PPR family. PCMP-E subfamily.

The protein is Pentatricopeptide repeat-containing protein At3g14730 (PCMP-E31) of Arabidopsis thaliana (Mouse-ear cress).